A 549-amino-acid chain; its full sequence is Glucose-6-phosphate isomerase (549 aa).

The active-site Proton donor is the Glu355. Active-site residues include His387 and Lys515.

Belongs to the GPI family.

It localises to the cytoplasm. It carries out the reaction alpha-D-glucose 6-phosphate = beta-D-fructose 6-phosphate. It functions in the pathway carbohydrate biosynthesis; gluconeogenesis. It participates in carbohydrate degradation; glycolysis; D-glyceraldehyde 3-phosphate and glycerone phosphate from D-glucose: step 2/4. Functionally, catalyzes the reversible isomerization of glucose-6-phosphate to fructose-6-phosphate. This is Glucose-6-phosphate isomerase from Haemophilus influenzae (strain PittEE).